A 463-amino-acid chain; its full sequence is L-seryl-tRNA(Sec) selenium transferase (463 aa).

Position 295 is an N6-(pyridoxal phosphate)lysine (Lys-295).

It belongs to the SelA family. In terms of assembly, homodecamer; pentamer of dimers. Binds only one seryl-tRNA(Sec) per dimer. Pyridoxal 5'-phosphate is required as a cofactor.

It localises to the cytoplasm. The catalysed reaction is L-seryl-tRNA(Sec) + selenophosphate + H(+) = L-selenocysteinyl-tRNA(Sec) + phosphate. It functions in the pathway aminoacyl-tRNA biosynthesis; selenocysteinyl-tRNA(Sec) biosynthesis; selenocysteinyl-tRNA(Sec) from L-seryl-tRNA(Sec) (bacterial route): step 1/1. In terms of biological role, converts seryl-tRNA(Sec) to selenocysteinyl-tRNA(Sec) required for selenoprotein biosynthesis. The chain is L-seryl-tRNA(Sec) selenium transferase from Escherichia coli O81 (strain ED1a).